A 343-amino-acid chain; its full sequence is Probable xyloglucan endotransglucosylase/hydrolase protein 30 (343 aa).

A signal peptide spans 1–23; that stretch reads MSKSSYNHIFILILCLCLRSSSA. Residues 24–224 form the GH16 domain; sequence FTNLNTLSFE…YKFAPFVAEF (201 aa). Glu-109 acts as the Nucleophile in catalysis. Glu-113 functions as the Proton donor in the catalytic mechanism. Xyloglucan is bound by residues Glu-113 and 126-128; that span reads QTN. Residue Asn-132 is glycosylated (N-linked (GlcNAc...) asparagine). Residues 136-140, 203-204, Gly-208, and Arg-285 each bind xyloglucan; these read HRGRE and DW. Residues Cys-280 and Cys-293 are joined by a disulfide bond. Positions 306–343 are disordered; sequence TGRLKFGGTEARERRRNRRQQRRPEIEIESDPDDRKLL.

This sequence belongs to the glycosyl hydrolase 16 family. XTH group 3 subfamily. In terms of processing, contains at least one intrachain disulfide bond essential for its enzymatic activity. Predominantly expressed in green siliques.

It is found in the secreted. It localises to the cell wall. The protein resides in the extracellular space. Its subcellular location is the apoplast. The catalysed reaction is breaks a beta-(1-&gt;4) bond in the backbone of a xyloglucan and transfers the xyloglucanyl segment on to O-4 of the non-reducing terminal glucose residue of an acceptor, which can be a xyloglucan or an oligosaccharide of xyloglucan.. Catalyzes xyloglucan endohydrolysis (XEH) and/or endotransglycosylation (XET). Cleaves and religates xyloglucan polymers, an essential constituent of the primary cell wall, and thereby participates in cell wall construction of growing tissues. The sequence is that of Probable xyloglucan endotransglucosylase/hydrolase protein 30 (XTH30) from Arabidopsis thaliana (Mouse-ear cress).